Reading from the N-terminus, the 52-residue chain is UPF0181 protein VPA0916 (52 aa).

Belongs to the UPF0181 family.

This is UPF0181 protein VPA0916 from Vibrio parahaemolyticus serotype O3:K6 (strain RIMD 2210633).